A 401-amino-acid polypeptide reads, in one-letter code: Imidazolonepropionase (401 aa).

The Fe(3+) site is built by H66 and H68. Residues H66 and H68 each contribute to the Zn(2+) site. 4-imidazolone-5-propanoate is bound by residues R75, Y138, and H171. Y138 serves as a coordination point for N-formimidoyl-L-glutamate. H236 is a Fe(3+) binding site. H236 is a binding site for Zn(2+). Residue Q239 participates in 4-imidazolone-5-propanoate binding. D311 lines the Fe(3+) pocket. Zn(2+) is bound at residue D311. Residues N313 and G315 each contribute to the N-formimidoyl-L-glutamate site. T316 lines the 4-imidazolone-5-propanoate pocket.

The protein belongs to the metallo-dependent hydrolases superfamily. HutI family. Requires Zn(2+) as cofactor. The cofactor is Fe(3+).

It localises to the cytoplasm. The enzyme catalyses 4-imidazolone-5-propanoate + H2O = N-formimidoyl-L-glutamate. Its pathway is amino-acid degradation; L-histidine degradation into L-glutamate; N-formimidoyl-L-glutamate from L-histidine: step 3/3. Its function is as follows. Catalyzes the hydrolytic cleavage of the carbon-nitrogen bond in imidazolone-5-propanoate to yield N-formimidoyl-L-glutamate. It is the third step in the universal histidine degradation pathway. In Pseudomonas savastanoi pv. phaseolicola (strain 1448A / Race 6) (Pseudomonas syringae pv. phaseolicola (strain 1448A / Race 6)), this protein is Imidazolonepropionase.